Reading from the N-terminus, the 424-residue chain is 5-methylthioadenosine/S-adenosylhomocysteine deaminase (424 aa).

Zn(2+) contacts are provided by His-60 and His-62. Substrate contacts are provided by Glu-89 and His-181. His-208 is a Zn(2+) binding site. Substrate is bound by residues Glu-211 and Asp-296. Asp-296 provides a ligand contact to Zn(2+).

This sequence belongs to the metallo-dependent hydrolases superfamily. MTA/SAH deaminase family. Requires Zn(2+) as cofactor.

The catalysed reaction is S-adenosyl-L-homocysteine + H2O + H(+) = S-inosyl-L-homocysteine + NH4(+). The enzyme catalyses S-methyl-5'-thioadenosine + H2O + H(+) = S-methyl-5'-thioinosine + NH4(+). Functionally, catalyzes the deamination of 5-methylthioadenosine and S-adenosyl-L-homocysteine into 5-methylthioinosine and S-inosyl-L-homocysteine, respectively. Is also able to deaminate adenosine. The polypeptide is 5-methylthioadenosine/S-adenosylhomocysteine deaminase (Thermococcus onnurineus (strain NA1)).